The primary structure comprises 201 residues: UPF0301 protein RHECIAT_CH0001061 (201 aa).

Belongs to the UPF0301 (AlgH) family.

The polypeptide is UPF0301 protein RHECIAT_CH0001061 (Rhizobium etli (strain CIAT 652)).